A 414-amino-acid chain; its full sequence is L-lysine 2,3-aminomutase (414 aa).

Positions 89 to 101 (AASDQEDPLHEDG) are enriched in basic and acidic residues. Positions 89–108 (AASDQEDPLHEDGDSPVPGL) are disordered. In terms of domain architecture, Radical SAM core spans 110–321 (HRYPDRVLLL…EGLRGHTSGY (212 aa)). [4Fe-4S] cluster-binding residues include cysteine 124, cysteine 128, and cysteine 131. Cysteine 267 serves as a coordination point for Zn(2+). Position 336 is an N6-(pyridoxal phosphate)lysine (lysine 336). Positions 374, 376, and 379 each coordinate Zn(2+).

This sequence belongs to the radical SAM superfamily. KamA family. Homotetramer. [4Fe-4S] cluster is required as a cofactor. Pyridoxal 5'-phosphate serves as cofactor. It depends on Zn(2+) as a cofactor.

The enzyme catalyses L-lysine = (3S)-3,6-diaminohexanoate. Its pathway is amino-acid degradation; L-lysine degradation via acetate pathway. Functionally, catalyzes the interconversion of L-alpha-lysine and L-beta-lysine. The protein is L-lysine 2,3-aminomutase (kamA) of Acetoanaerobium sticklandii (strain ATCC 12662 / DSM 519 / JCM 1433 / CCUG 9281 / NCIMB 10654 / HF) (Clostridium sticklandii).